Reading from the N-terminus, the 289-residue chain is Protease HtpX homolog (289 aa).

Transmembrane regions (helical) follow at residues 8–28 (LALL…VIGG) and 29–49 (SSGL…SWYQ). His-132 is a binding site for Zn(2+). The active site involves Glu-133. His-136 serves as a coordination point for Zn(2+). Helical transmembrane passes span 151–171 (VAGA…FGGI) and 183–203 (LGVL…QLAI). Glu-208 contributes to the Zn(2+) binding site.

Belongs to the peptidase M48B family. Zn(2+) serves as cofactor.

The protein resides in the cell inner membrane. This chain is Protease HtpX homolog, found in Nostoc sp. (strain PCC 7120 / SAG 25.82 / UTEX 2576).